We begin with the raw amino-acid sequence, 205 residues long: Max-like protein homolog 2 (205 aa).

2 stretches are compositionally biased toward low complexity: residues 1–12 (MSRSRSAAASSS) and 26–40 (SASS…ATNS). A disordered region spans residues 1–58 (MSRSRSAAASSSQKPDDMDLMSPDGSASSPSAPNTPATNSGGFSSDRKKATHLRCERQ). Residues 45-58 (SDRKKATHLRCERQ) show a composition bias toward basic and acidic residues. Residues 47–60 (RKKATHLRCERQRR) form a basic motif region. In terms of domain architecture, bHLH spans 47–101 (RKKATHLRCERQRREAINSGYSDLKDLIPQTTTSLGCKTTNAAILFRACDFMSQL). The helix-loop-helix motif stretch occupies residues 61–101 (EAINSGYSDLKDLIPQTTTSLGCKTTNAAILFRACDFMSQL). Residues 98-132 (MSQLKTDISDADKQLAQLNAQAAALEMIASEYEQM) adopt a coiled-coil conformation.

As to expression, widely expressed.

The protein localises to the nucleus. It localises to the cytoplasm. Its subcellular location is the mitochondrion. In terms of biological role, transcription factor. Binds to the E box motif 5'-CACGTG-3', probably in a heterodimeric complex with mml-1. Involved in modulating longevity in response to TOR signaling, dietary restriction, the decline in protein homeostasis associated with normal aging, germline signaling and the insulin-like signaling pathway. Plays a role in autophagy. Involved in regulating migration of the ray 1 precursor cells in the male tail, acting in concert with Wnt and semaphorin signaling pathways. Regulates transcription of genes encoding extracellular matrix (ECM) components which may contribute to the substratum required for migration of the neighboring ray 1 precursor cells. Required for resistance to oxidative stress. Involved in promoting infection by the microsporidian pathogen N.parisii, probably acting independently of its canonical partner, mml-1. This Caenorhabditis elegans protein is Max-like protein homolog 2.